The primary structure comprises 494 residues: Histidine--tRNA ligase (494 aa).

The disordered stretch occupies residues 1–20; the sequence is MAKDQKKQPRPKAETPKGFR.

It belongs to the class-II aminoacyl-tRNA synthetase family. Homodimer.

It localises to the cytoplasm. It carries out the reaction tRNA(His) + L-histidine + ATP = L-histidyl-tRNA(His) + AMP + diphosphate + H(+). The chain is Histidine--tRNA ligase from Paracoccus denitrificans (strain Pd 1222).